The chain runs to 307 residues: Porphobilinogen deaminase (307 aa).

Residue Cys241 is modified to S-(dipyrrolylmethanemethyl)cysteine.

It belongs to the HMBS family. As to quaternary structure, monomer. Dipyrromethane serves as cofactor.

The catalysed reaction is 4 porphobilinogen + H2O = hydroxymethylbilane + 4 NH4(+). The protein operates within porphyrin-containing compound metabolism; protoporphyrin-IX biosynthesis; coproporphyrinogen-III from 5-aminolevulinate: step 2/4. Functionally, tetrapolymerization of the monopyrrole PBG into the hydroxymethylbilane pre-uroporphyrinogen in several discrete steps. This chain is Porphobilinogen deaminase, found in Macrococcus caseolyticus (strain JCSC5402) (Macrococcoides caseolyticum).